We begin with the raw amino-acid sequence, 150 residues long: Histone H2A.1 (150 aa).

Position 1 is an N-acetylmethionine (Met1). 2 stretches are compositionally biased toward basic residues: residues 1–24 and 141–150; these read MDASTKTKKGAGGRKGGGPRKKSV and SKAKKSPKKA. Disordered stretches follow at residues 1–26 and 128–150; these read MDASTKTKKGAGGRKGGGPRKKSVTR and RKENAAASTPKSPSKAKKSPKKA. 2 consecutive short sequence motifs (SPKK motif) follow at residues 139-142 and 146-149; these read SPSK and SPKK.

This sequence belongs to the histone H2A family. In terms of assembly, the nucleosome is a histone octamer containing two molecules each of H2A, H2B, H3 and H4 assembled in one H3-H4 heterotetramer and two H2A-H2B heterodimers. The octamer wraps approximately 147 bp of DNA. High expression in root meristematic tissues, moderate in whole shoot and very low in mature leaves.

Its subcellular location is the nucleus. The protein resides in the chromosome. Functionally, core component of nucleosome. Nucleosomes wrap and compact DNA into chromatin, limiting DNA accessibility to the cellular machineries which require DNA as a template. Histones thereby play a central role in transcription regulation, DNA repair, DNA replication and chromosomal stability. DNA accessibility is regulated via a complex set of post-translational modifications of histones, also called histone code, and nucleosome remodeling. The protein is Histone H2A.1 of Pisum sativum (Garden pea).